A 213-amino-acid chain; its full sequence is Glycerol-3-phosphate acyltransferase (213 aa).

The next 6 helical transmembrane spans lie at 2–22 (ITIVLLILAYLLGSIPSGLWI), 54–74 (MATFVIDFFKGTLATLLPIMF), 80–100 (SPLIFGLLAVIGHTFPIFAGF), 110–130 (AGVVFGFAPVFCLYLAVVFFG), 143–163 (VTASIAAVIGVLLFPLFGFIL), and 165–185 (NYDPLFIAIILALASLIIIRH).

It belongs to the PlsY family. In terms of assembly, probably interacts with PlsX.

The protein localises to the cell membrane. The catalysed reaction is an acyl phosphate + sn-glycerol 3-phosphate = a 1-acyl-sn-glycero-3-phosphate + phosphate. It functions in the pathway lipid metabolism; phospholipid metabolism. Catalyzes the transfer of an acyl group from acyl-phosphate (acyl-PO(4)) to glycerol-3-phosphate (G3P) to form lysophosphatidic acid (LPA). This enzyme utilizes acyl-phosphate as fatty acyl donor, but not acyl-CoA or acyl-ACP. The protein is Glycerol-3-phosphate acyltransferase of Streptococcus pneumoniae (strain Taiwan19F-14).